A 197-amino-acid polypeptide reads, in one-letter code: Cell division protein SepF (197 aa).

The segment at 15–91 is disordered; sequence DEEEVESPEE…PPSKSNGKNV (77 aa). Positions 22-31 are enriched in basic and acidic residues; the sequence is PEERQRRVVQ. A compositionally biased stretch (low complexity) spans 37-47; the sequence is TNNVQQNQPQQ. Composition is skewed to polar residues over residues 48 to 58 and 78 to 91; these read SERSYSNQSKL and RMNQ…GKNV.

It belongs to the SepF family. As to quaternary structure, homodimer. Interacts with FtsZ.

It is found in the cytoplasm. Cell division protein that is part of the divisome complex and is recruited early to the Z-ring. Probably stimulates Z-ring formation, perhaps through the cross-linking of FtsZ protofilaments. Its function overlaps with FtsA. The polypeptide is Cell division protein SepF (Staphylococcus haemolyticus (strain JCSC1435)).